The sequence spans 354 residues: Protein-arginine kinase (354 aa).

In terms of domain architecture, Phosphagen kinase C-terminal spans 24 to 254 (IVLSSRIRLA…QQIIQQEKLA (231 aa)). ATP contacts are provided by residues 27–31 (SSRIR), His-92, Arg-125, 176–180 (RASVM), and 207–212 (RGIYGE). The RDXXRA motif of the pArg binding pocket involved in allosteric regulation signature appears at 337–342 (RDYRRA).

It belongs to the ATP:guanido phosphotransferase family.

The enzyme catalyses L-arginyl-[protein] + ATP = N(omega)-phospho-L-arginyl-[protein] + ADP + H(+). Appears to be allosterically activated by the binding of pArg-containing polypeptides to the pArg-binding pocket localized in the C-terminal domain of McsB. Functionally, catalyzes the specific phosphorylation of arginine residues in a large number of proteins. Is part of the bacterial stress response system. Protein arginine phosphorylation has a physiologically important role and is involved in the regulation of many critical cellular processes, such as protein homeostasis, motility, competence, and stringent and stress responses, by regulating gene expression and protein activity. The protein is Protein-arginine kinase of Bacillus cereus (strain B4264).